Consider the following 138-residue polypeptide: Small ribosomal subunit protein uS12 (138 aa).

Residues 33 to 55 are disordered; it reads KEHTNVSSPQKRGVCTRVGTMTP. 3-methylthioaspartic acid is present on D102.

This sequence belongs to the universal ribosomal protein uS12 family. Part of the 30S ribosomal subunit. Contacts proteins S8 and S17. May interact with IF1 in the 30S initiation complex.

Functionally, with S4 and S5 plays an important role in translational accuracy. In terms of biological role, interacts with and stabilizes bases of the 16S rRNA that are involved in tRNA selection in the A site and with the mRNA backbone. Located at the interface of the 30S and 50S subunits, it traverses the body of the 30S subunit contacting proteins on the other side and probably holding the rRNA structure together. The combined cluster of proteins S8, S12 and S17 appears to hold together the shoulder and platform of the 30S subunit. This is Small ribosomal subunit protein uS12 from Bacillus velezensis (strain DSM 23117 / BGSC 10A6 / LMG 26770 / FZB42) (Bacillus amyloliquefaciens subsp. plantarum).